Consider the following 633-residue polypeptide: Probable potassium transport system protein Kup (633 aa).

12 helical membrane-spanning segments follow: residues 19-39, 61-81, 112-132, 148-168, 179-199, 217-237, 258-278, 290-310, 348-368, 380-400, 405-425, and 430-450; these read LGML…SPLY, ILAL…VLFI, VLVI…MITP, SGLE…LFLI, LFGP…INGI, FFIV…LALT, WFAL…ALLL, LLAP…ATVI, IYIG…VLGF, VAVT…MLLL, PVLA…FFAA, and IFQG…LMTT.

Belongs to the HAK/KUP transporter (TC 2.A.72) family.

The protein resides in the cell inner membrane. The enzyme catalyses K(+)(in) + H(+)(in) = K(+)(out) + H(+)(out). In terms of biological role, transport of potassium into the cell. Likely operates as a K(+):H(+) symporter. The protein is Probable potassium transport system protein Kup of Pseudomonas fluorescens (strain ATCC BAA-477 / NRRL B-23932 / Pf-5).